Here is a 1371-residue protein sequence, read N- to C-terminus: uncharacterized protein (1371 aa).

A disordered region spans residues 1020–1048 (WYLSSSKNTPEPRPDPEPTPEGHDNNLRP). Positions 1029 to 1046 (PEPRPDPEPTPEGHDNNL) are enriched in basic and acidic residues. Residues 1083–1371 (GEPKATSMWM…SAMLGVKYTF (289 aa)) enclose the Autotransporter domain.

Its subcellular location is the cell outer membrane. This is an uncharacterized protein from Escherichia coli (strain K12).